An 84-amino-acid chain; its full sequence is MSNKGQLLQEPFLNTLRREHVPVSIYLVNGIKLQGQIESFDQYVVLLRNTVTQMVFKHAISTIVPGRAVHFSTAEPADANSNNG.

One can recognise a Sm domain in the interval 10 to 69 (EPFLNTLRREHVPVSIYLVNGIKLQGQIESFDQYVVLLRNTVTQMVFKHAISTIVPGRAV).

It belongs to the Hfq family. In terms of assembly, homohexamer.

Functionally, RNA chaperone that binds small regulatory RNA (sRNAs) and mRNAs to facilitate mRNA translational regulation in response to envelope stress, environmental stress and changes in metabolite concentrations. Also binds with high specificity to tRNAs. The protein is RNA-binding protein Hfq of Verminephrobacter eiseniae (strain EF01-2).